Consider the following 550-residue polypeptide: Chaperonin GroEL (550 aa).

ATP contacts are provided by residues 30-33 (TLGP), lysine 51, 87-91 (DGTTT), glycine 415, and aspartate 496.

Belongs to the chaperonin (HSP60) family. As to quaternary structure, forms a cylinder of 14 subunits composed of two heptameric rings stacked back-to-back. Interacts with the co-chaperonin GroES.

Its subcellular location is the cytoplasm. It carries out the reaction ATP + H2O + a folded polypeptide = ADP + phosphate + an unfolded polypeptide.. In terms of biological role, together with its co-chaperonin GroES, plays an essential role in assisting protein folding. The GroEL-GroES system forms a nano-cage that allows encapsulation of the non-native substrate proteins and provides a physical environment optimized to promote and accelerate protein folding. This chain is Chaperonin GroEL, found in Rickettsia bellii (strain OSU 85-389).